A 304-amino-acid chain; its full sequence is Putative S-adenosyl-L-methionine-dependent methyltransferase MAP_3385 (304 aa).

Residues Asp129 and 158-159 (DL) each bind S-adenosyl-L-methionine.

The protein belongs to the UPF0677 family.

Exhibits S-adenosyl-L-methionine-dependent methyltransferase activity. The sequence is that of Putative S-adenosyl-L-methionine-dependent methyltransferase MAP_3385 from Mycolicibacterium paratuberculosis (strain ATCC BAA-968 / K-10) (Mycobacterium paratuberculosis).